The sequence spans 497 residues: Dihydrolipoyl dehydrogenase (497 aa).

Residues 60 to 69, Lys78, Gly142, and 170 to 172 contribute to the FAD site; these read EKEPSLGGTC and TGS. Cysteines 69 and 74 form a disulfide. Residues 207-214, Glu230, Val264, and Gly302 contribute to the NAD(+) site; that span reads GAGVIGLE. FAD contacts are provided by residues Asp343 and 349–352; that span reads MLAH. His475 serves as the catalytic Proton acceptor.

The protein belongs to the class-I pyridine nucleotide-disulfide oxidoreductase family. In terms of assembly, homodimer. Requires FAD as cofactor.

It localises to the cytoplasm. The catalysed reaction is N(6)-[(R)-dihydrolipoyl]-L-lysyl-[protein] + NAD(+) = N(6)-[(R)-lipoyl]-L-lysyl-[protein] + NADH + H(+). In Manduca sexta (Tobacco hawkmoth), this protein is Dihydrolipoyl dehydrogenase.